Here is a 149-residue protein sequence, read N- to C-terminus: Urease accessory protein UreE (149 aa).

Belongs to the UreE family.

It is found in the cytoplasm. Involved in urease metallocenter assembly. Binds nickel. Probably functions as a nickel donor during metallocenter assembly. This is Urease accessory protein UreE from Ureaplasma parvum serovar 3 (strain ATCC 700970).